Here is a 269-residue protein sequence, read N- to C-terminus: uncharacterized protein (269 aa).

The next 6 membrane-spanning stretches (helical) occupy residues 21-43 (LNVW…ILFT), 48-70 (LFLI…FSLI), 121-143 (YLIL…VFTF), 147-166 (FIIA…FWII), 205-227 (SLEV…LFQF), and 242-264 (FVAF…YLLW).

Its subcellular location is the cell membrane. This is an uncharacterized protein from Aquifex aeolicus (strain VF5).